Reading from the N-terminus, the 227-residue chain is MVKSSLQRILNSHCFAREKEGDKPSATVHATRTMPLLSLHSRGGRSSESSRVSINCCSNLGPGPRWCSDVPHPPLKIPGGRGNSQRDHNLSANLFYSDNRLNVTEELTSNNKTRIFNVQSRLTEAKHINWRAVLSNSCLYVEIPGGALPEGSKDSFAVLLEFAEEQLHVDHVFICFHKNRDDRAALLRTFSFLGFEIVRPGHPLVPKRPDACFMAYTFERESSGEEE.

Positions 20-50 (EGDKPSATVHATRTMPLLSLHSRGGRSSESS) are disordered. The span at 36–50 (LLSLHSRGGRSSESS) shows a compositional bias: low complexity.

This sequence belongs to the ODC antizyme family. Interacts with ODC1 and thereby sterically blocks ODC homodimerization. Forms a ternary complex with PSMB4 and OAZ1 before PSMB4 is incorporated into the 20S proteasome. Interacts with AZIN2; this interaction disrupts the interaction between the antizyme and ODC1. Interacts with FAM171A1.

Functionally, ornithine decarboxylase (ODC) antizyme protein that negatively regulates ODC activity and intracellular polyamine biosynthesis and uptake in response to increased intracellular polyamine levels. Binds to ODC monomers, inhibiting the assembly of the functional ODC homodimer, and targets the monomers for ubiquitin-independent proteolytic destruction by the 26S proteasome. Triggers ODC degradation by inducing the exposure of a cryptic proteasome-interacting surface of ODC. Stabilizes AZIN2 by interfering with its ubiquitination. Also inhibits cellular uptake of polyamines by inactivating the polyamine uptake transporter. SMAD1/OAZ1/PSMB4 complex mediates the degradation of the CREBBP/EP300 repressor SNIP1. Involved in the translocation of AZIN2 from ER-Golgi intermediate compartment (ERGIC) to the cytosol. The sequence is that of Ornithine decarboxylase antizyme 1 (OAZ1) from Bos taurus (Bovine).